The sequence spans 474 residues: tRNA-2-methylthio-N(6)-dimethylallyladenosine synthase (474 aa).

The 118-residue stretch at 3–120 (KKLHIKTWGC…LPEMINSVRG (118 aa)) folds into the MTTase N-terminal domain. Residues cysteine 12, cysteine 49, cysteine 83, cysteine 157, cysteine 161, and cysteine 164 each contribute to the [4Fe-4S] cluster site. The region spanning 143–375 (RAEGPTAFVS…QERINQQAMA (233 aa)) is the Radical SAM core domain. The TRAM domain maps to 378 to 441 (RRMLGTTQRI…PNSLRGKVVR (64 aa)).

This sequence belongs to the methylthiotransferase family. MiaB subfamily. Monomer. Requires [4Fe-4S] cluster as cofactor.

Its subcellular location is the cytoplasm. The catalysed reaction is N(6)-dimethylallyladenosine(37) in tRNA + (sulfur carrier)-SH + AH2 + 2 S-adenosyl-L-methionine = 2-methylsulfanyl-N(6)-dimethylallyladenosine(37) in tRNA + (sulfur carrier)-H + 5'-deoxyadenosine + L-methionine + A + S-adenosyl-L-homocysteine + 2 H(+). In terms of biological role, catalyzes the methylthiolation of N6-(dimethylallyl)adenosine (i(6)A), leading to the formation of 2-methylthio-N6-(dimethylallyl)adenosine (ms(2)i(6)A) at position 37 in tRNAs that read codons beginning with uridine. The sequence is that of tRNA-2-methylthio-N(6)-dimethylallyladenosine synthase from Escherichia coli (strain SMS-3-5 / SECEC).